The sequence spans 154 residues: MSDLDRLASRAAIQDLYSDQLIGVDKRQEGRLASIWWDDAEWTIEGIGTYKGPEGALDLANNVLWPMYHETIHYGTNLRLEFVSADKVNGIGDVLCLGNLVEGNQSILIAAVYTNEYERRDGVWKLSKLNGCMNYFTPLAGIHFAPPGALLQKS.

Residue D25 is part of the active site. The active-site Proton acceptor is H73.

Belongs to the HCH dehydrochlorinase family. As to quaternary structure, homotrimer.

It is found in the periplasm. The enzyme catalyses gamma-hexachlorocyclohexane = (3R,4S,5S,6R)-pentachlorocyclohexene + chloride + H(+). It carries out the reaction (3R,4S,5S,6R)-pentachlorocyclohexene = (3R,6R)-1,3,4,6-tetrachlorocyclohexa-1,4-diene + chloride + H(+). It functions in the pathway xenobiotic degradation; hexachlorocyclohexane degradation. In terms of biological role, catalyzes the conversion of the important environmental pollutant gamma-hexachlorocyclohexane (gamma-HCH or lindane) to 1,3,4,6-tetrachloro-1,4-cyclohexadiene (1,4-TCDN) via gamma-pentachlorocyclohexene (gamma-PCCH). Proceeds by two successive 1,2-anti conformationally dependent dehydrochlorinations. Also shows activity with alpha- and delta-HCH, giving alpha- and delta-PCCH respectively, but not with the beta isomer. This chain is Hexachlorocyclohexane dehydrochlorinase 1, found in Sphingobium indicum (strain DSM 16412 / CCM 7286 / MTCC 6364 / B90A).